The chain runs to 131 residues: Transcription antitermination protein NusB (131 aa).

This sequence belongs to the NusB family.

In terms of biological role, involved in transcription antitermination. Required for transcription of ribosomal RNA (rRNA) genes. Binds specifically to the boxA antiterminator sequence of the ribosomal RNA (rrn) operons. This chain is Transcription antitermination protein NusB, found in Bacillus pumilus (strain SAFR-032).